Reading from the N-terminus, the 533-residue chain is GMP synthase [glutamine-hydrolyzing] (533 aa).

One can recognise a Glutamine amidotransferase type-1 domain in the interval 12-206; it reads TILVLDFGSQ…AVGICGAEQK (195 aa). Cys-88 acts as the Nucleophile in catalysis. Active-site residues include His-180 and Glu-182. The 202-residue stretch at 207-408 folds into the GMPS ATP-PPase domain; the sequence is WTMAEFIGQE…LGISPELVGR (202 aa). ATP is bound at residue 235–241; sequence SGGVDST. Positions 308, 470, 525, and 531 each coordinate XMP.

In terms of assembly, homodimer. Mg(2+) is required as a cofactor.

It is found in the cytoplasm. Its subcellular location is the cytosol. It catalyses the reaction XMP + L-glutamine + ATP + H2O = GMP + L-glutamate + AMP + diphosphate + 2 H(+). It functions in the pathway purine metabolism; GMP biosynthesis; GMP from XMP (L-Gln route): step 1/1. In terms of biological role, catalyzes the conversion of xanthine monophosphate (XMP) to GMP in the presence of glutamine and ATP through an adenyl-XMP intermediate. This is GMP synthase [glutamine-hydrolyzing] (gua1) from Emericella nidulans (strain FGSC A4 / ATCC 38163 / CBS 112.46 / NRRL 194 / M139) (Aspergillus nidulans).